The chain runs to 633 residues: Endosomal/prevacuolar sodium/hydrogen exchanger (633 aa).

The N-terminal stretch at 1 to 21 is a signal peptide; the sequence is MLSKVLLNIAFKVLLTTAKRA. Residues 22–61 lie on the Lumenal side of the membrane; that stretch reads VDPDDDDELLPSPDLPGSDDPIAGDPDVDLNPVTEEMFSS. The disordered stretch occupies residues 25-44; the sequence is DDDDELLPSPDLPGSDDPIA. Positions 31 to 42 are enriched in low complexity; the sequence is LPSPDLPGSDDP. The chain crosses the membrane as a helical span at residues 62-82; that stretch reads WALFIMLLLLISALWSSYYLT. Residues 83-85 lie on the Cytoplasmic side of the membrane; that stretch reads QKR. A helical transmembrane segment spans residues 86 to 106; it reads IRAVHETVLSIFYGMVIGLII. At 107–117 the chain is on the lumenal side; that stretch reads RMSPGHYIQDT. A helical transmembrane segment spans residues 118–138; that stretch reads VTFNSSYFFNVLLPPIILNSG. An Amiloride-binding motif is present at residues 124-133; sequence YFFNVLLPPI. Topologically, residues 139 to 152 are cytoplasmic; the sequence is YELNQVNFFNNMLS. The chain crosses the membrane as a helical span at residues 153-173; that stretch reads ILIFAIPGTFISAVVIGIILY. Topologically, residues 174-189 are lumenal; sequence IWTFLGLESIDISFAD. The chain crosses the membrane as a helical span at residues 190–211; the sequence is AMSVGATLSATDPVTILSIFNA. The Cytoplasmic segment spans residues 212 to 217; it reads YKVDPK. The helical transmembrane segment at 218 to 238 threads the bilayer; sequence LYTIIFGESLLNDAISIVMFE. Topologically, residues 239–258 are lumenal; it reads TCQKFHGQPATFSSVFEGAG. The chain crosses the membrane as a helical span at residues 259-279; it reads LFLMTFSVSLLIGVLIGILVA. The Cytoplasmic segment spans residues 280–288; it reads LLLKHTHIR. Residues 289–308 form a helical membrane-spanning segment; that stretch reads RYPQIESCLILLIAYESYFF. Topologically, residues 309–313 are lumenal; that stretch reads SNGCH. A helical transmembrane segment spans residues 314 to 333; that stretch reads MSGIVSLLFCGITLKHYAYY. Residues 334–344 lie on the Cytoplasmic side of the membrane; sequence NMSRRSQITIK. A helical transmembrane segment spans residues 345 to 364; the sequence is YIFQLLARLSENFIFIYLGL. The Cytoplasmic portion of the chain corresponds to 365–376; it reads ELFTEVELVYKP. Residues 377–397 form a helical membrane-spanning segment; that stretch reads LLIIVAAISICVARWCAVFPL. Residues 398–431 are Lumenal-facing; sequence SQFVNWIYRVKTIRSMSGITGENISVPDEIPYNY. N-linked (GlcNAc...) asparagine glycosylation occurs at Asn420. A helical membrane pass occupies residues 432–452; sequence QMMTFWAGLRGAVGVALALGI. Over 453-457 the chain is Cytoplasmic; that stretch reads QGEYK. A helical transmembrane segment spans residues 458 to 478; sequence FTLLATVLVVVVLTVIIFGGT. At Thr490 the chain carries Phosphothreonine. Ser494 carries the post-translational modification Phosphoserine. Position 498 is a phosphothreonine (Thr498). A Phosphoserine modification is found at Ser499. Asn515, Asn550, and Asn563 each carry an N-linked (GlcNAc...) asparagine glycan. The interval 553–578 is disordered; the sequence is TTGGNTFGGLNETENTSPNPARSSMD. The segment covering 564–574 has biased composition (polar residues); sequence ETENTSPNPAR. Ser569 is subject to Phosphoserine.

It belongs to the monovalent cation:proton antiporter 1 (CPA1) transporter (TC 2.A.36) family. As to quaternary structure, interacts with CYP6.

Its subcellular location is the endosome membrane. It localises to the prevacuolar compartment membrane. Endosomal/prevacuolar electroneutral Na(+)/H(+) exchanger which mediates intracellular sequestration of Na(+) cations, regulates vacuolar pH and contributes to osmotolerance following sudden exposure to hyperosmotic media. Also contributes to the postdiauxic/stationary phase resistance to osmotic stress and allows for the continued growth of cells until the acquired osmotolerance response can occur. Involved in hygromycin resistance probably through its influence on the electrochemical proton gradient affecting secondarily the entrance of hygromycin. Mediates pH-dependent vesicle trafficking out of the endosome. Contributes to K(+) sequestration and homeostasis. This chain is Endosomal/prevacuolar sodium/hydrogen exchanger (NHX1), found in Saccharomyces cerevisiae (strain ATCC 204508 / S288c) (Baker's yeast).